The following is a 129-amino-acid chain: Glycine cleavage system H protein (129 aa).

The Lipoyl-binding domain occupies Ser-24–Met-106. Lys-65 carries the post-translational modification N6-lipoyllysine.

Belongs to the GcvH family. The glycine cleavage system is composed of four proteins: P, T, L and H. The cofactor is (R)-lipoate.

The glycine cleavage system catalyzes the degradation of glycine. The H protein shuttles the methylamine group of glycine from the P protein to the T protein. This Shewanella putrefaciens (strain CN-32 / ATCC BAA-453) protein is Glycine cleavage system H protein.